A 128-amino-acid chain; its full sequence is 2-iminobutanoate/2-iminopropanoate deaminase (128 aa).

It belongs to the RutC family.

Its subcellular location is the cytoplasm. The catalysed reaction is 2-iminobutanoate + H2O = 2-oxobutanoate + NH4(+). It carries out the reaction 2-iminopropanoate + H2O = pyruvate + NH4(+). Catalyzes the hydrolytic deamination of enamine/imine intermediates that form during the course of normal metabolism. May facilitate the release of ammonia from these potentially toxic reactive metabolites, reducing their impact on cellular components. It may act on enamine/imine intermediates formed by several types of pyridoxal-5'-phosphate-dependent dehydratases including L-threonine dehydratase. Preferentially digests Leu and Met in cooperation with L-amino acid oxidase, but digests Phe poorly. In Dermatophagoides farinae (American house dust mite), this protein is 2-iminobutanoate/2-iminopropanoate deaminase.